A 483-amino-acid polypeptide reads, in one-letter code: Membrane-bound lytic murein transglycosylase F (483 aa).

The N-terminal stretch at 1-18 (MKGLVIRISVALALLLWA) is a signal peptide. The interval 19–270 (VDMVFPWQQI…RIEEKYFSHI (252 aa)) is non-LT domain. The segment at 272–483 (QFDYVDIKSY…IMITPQNSQD (212 aa)) is LT domain. The active site involves Glu-315.

This sequence in the N-terminal section; belongs to the bacterial solute-binding protein 3 family. It in the C-terminal section; belongs to the transglycosylase Slt family.

The protein localises to the cell outer membrane. It carries out the reaction Exolytic cleavage of the (1-&gt;4)-beta-glycosidic linkage between N-acetylmuramic acid (MurNAc) and N-acetylglucosamine (GlcNAc) residues in peptidoglycan, from either the reducing or the non-reducing ends of the peptidoglycan chains, with concomitant formation of a 1,6-anhydrobond in the MurNAc residue.. Murein-degrading enzyme that degrades murein glycan strands and insoluble, high-molecular weight murein sacculi, with the concomitant formation of a 1,6-anhydromuramoyl product. Lytic transglycosylases (LTs) play an integral role in the metabolism of the peptidoglycan (PG) sacculus. Their lytic action creates space within the PG sacculus to allow for its expansion as well as for the insertion of various structures such as secretion systems and flagella. The protein is Membrane-bound lytic murein transglycosylase F of Actinobacillus succinogenes (strain ATCC 55618 / DSM 22257 / CCUG 43843 / 130Z).